The following is a 166-amino-acid chain: Dihydrofolate reductase (166 aa).

The DHFR domain maps to 6–164 (KISLIVAMDK…YDYYFHIYER (159 aa)). Position 10–12 (10–12 (IVA)) interacts with substrate. NADP(+)-binding positions include 11-12 (VA) and 19-24 (IGKDND). D32 is a substrate binding site. 48-51 (GRKN) contributes to the NADP(+) binding site. R62 lines the substrate pocket. Residues 67 to 70 (LTRD) and 100 to 105 (FGGEQI) contribute to the NADP(+) site. Residue T119 participates in substrate binding.

The protein belongs to the dihydrofolate reductase family.

The enzyme catalyses (6S)-5,6,7,8-tetrahydrofolate + NADP(+) = 7,8-dihydrofolate + NADPH + H(+). It functions in the pathway cofactor biosynthesis; tetrahydrofolate biosynthesis; 5,6,7,8-tetrahydrofolate from 7,8-dihydrofolate: step 1/1. Its function is as follows. Key enzyme in folate metabolism. Catalyzes an essential reaction for de novo glycine and purine synthesis, and for DNA precursor synthesis. This is Dihydrofolate reductase (dfrD) from Staphylococcus haemolyticus.